The sequence spans 334 residues: Small ribosomal subunit protein uS2 (334 aa).

This sequence belongs to the universal ribosomal protein uS2 family.

In Rhodopseudomonas palustris (strain BisB18), this protein is Small ribosomal subunit protein uS2.